The sequence spans 86 residues: MVVIRLARGGSKKRPFYNLVATDSRNRRDGRFVERVGFYNPVGSEGSENLRIALDRVKYWVDNGAQLSPAVERLVKEHSAKVSAAA.

This sequence belongs to the bacterial ribosomal protein bS16 family.

The protein is Small ribosomal subunit protein bS16 of Bordetella avium (strain 197N).